We begin with the raw amino-acid sequence, 198 residues long: NAD(P)H dehydrogenase (quinone) (198 aa).

A Flavodoxin-like domain is found at 4–189 (ILVLYYSMYG…SIARYQGEYV (186 aa)). Residues 10-15 (SMYGHI) and 78-80 (TRF) contribute to the FMN site. Tyrosine 12 serves as a coordination point for NAD(+). Residue tryptophan 98 participates in substrate binding. FMN contacts are provided by residues 113 to 118 (STGTGG) and histidine 133.

It belongs to the WrbA family. The cofactor is FMN.

It carries out the reaction a quinone + NADH + H(+) = a quinol + NAD(+). The catalysed reaction is a quinone + NADPH + H(+) = a quinol + NADP(+). In Salmonella paratyphi A (strain ATCC 9150 / SARB42), this protein is NAD(P)H dehydrogenase (quinone).